Consider the following 391-residue polypeptide: GTPase Obg (391 aa).

Residues 1–159 (MKFIDEALIR…RDLLLELMLL (159 aa)) form the Obg domain. The OBG-type G domain occupies 160-333 (ADVGMLGLPN…LTRDIMDFIE (174 aa)). GTP is bound by residues 166–173 (GLPNAGKS), 191–195 (FTTLV), 213–216 (DIPG), 283–286 (NKID), and 314–316 (SAA). The Mg(2+) site is built by S173 and T193.

Belongs to the TRAFAC class OBG-HflX-like GTPase superfamily. OBG GTPase family. Monomer. Mg(2+) serves as cofactor.

The protein localises to the cytoplasm. In terms of biological role, an essential GTPase which binds GTP, GDP and possibly (p)ppGpp with moderate affinity, with high nucleotide exchange rates and a fairly low GTP hydrolysis rate. Plays a role in control of the cell cycle, stress response, ribosome biogenesis and in those bacteria that undergo differentiation, in morphogenesis control. This is GTPase Obg from Haemophilus ducreyi (strain 35000HP / ATCC 700724).